A 390-amino-acid polypeptide reads, in one-letter code: Probable purine permease 7 (390 aa).

10 consecutive transmembrane segments (helical) span residues 42–62, 74–94, 110–130, 131–151, 169–189, 205–225, 244–264, 286–306, 312–332, and 341–361; these read WLRV…ATIL, TYVV…FRFF, SPSF…VSAY, AYLS…LILA, FTPL…LLVV, VIGF…LSLI, LAIY…FASG, TLAS…GLIF, FSNS…VIVF, and IFSI…HYLD.

This sequence belongs to the purine permeases (TC 2.A.7.14) family.

The protein localises to the membrane. The protein is Probable purine permease 7 (PUP7) of Arabidopsis thaliana (Mouse-ear cress).